Reading from the N-terminus, the 191-residue chain is Prostaglandin-H2 D-isomerase (191 aa).

The signal sequence occupies residues 1–24; it reads MATPNRPWMGLLLLGVLGVLQTPA. A glycan (N-linked (GlcNAc...) asparagine) is linked at asparagine 51. Cysteine 65 (nucleophile) is an active-site residue. Residue asparagine 78 is glycosylated (N-linked (GlcNAc...) asparagine). Cysteine 89 and cysteine 186 form a disulfide bridge.

It belongs to the calycin superfamily. Lipocalin family. As to quaternary structure, monomer. In terms of tissue distribution, in the male reproductive system, it is expressed in the testis and epididymis, and is secreted into the seminal fluid.

The protein localises to the rough endoplasmic reticulum. It is found in the nucleus membrane. The protein resides in the golgi apparatus. Its subcellular location is the cytoplasm. It localises to the perinuclear region. The protein localises to the secreted. The enzyme catalyses prostaglandin H2 = prostaglandin D2. Catalyzes the conversion of PGH2 to PGD2, a prostaglandin involved in smooth muscle contraction/relaxation and a potent inhibitor of platelet aggregation. Involved in a variety of CNS functions, such as sedation, NREM sleep and PGE2-induced allodynia, and may have an anti-apoptotic role in oligodendrocytes. Binds small non-substrate lipophilic molecules, including biliverdin, bilirubin, retinal, retinoic acid and thyroid hormone, and may act as a scavenger for harmful hydrophobic molecules and as a secretory retinoid and thyroid hormone transporter. Possibly involved in development and maintenance of the blood-brain, blood-retina, blood-aqueous humor and blood-testis barrier. It is likely to play important roles in both maturation and maintenance of the central nervous system and male reproductive system. Involved in PLA2G3-dependent maturation of mast cells. PLA2G3 is secreted by immature mast cells and acts on nearby fibroblasts upstream to PTDGS to synthesize PGD2, which in turn promotes mast cell maturation and degranulation via PTGDR. This is Prostaglandin-H2 D-isomerase (PTGDS) from Ovis aries (Sheep).